A 400-amino-acid polypeptide reads, in one-letter code: Small ribosomal subunit protein bS1 (400 aa).

S1 motif domains are found at residues 17 to 87 (GDVV…VTYL), 107 to 173 (EEVV…LSRR), 194 to 262 (GDVV…LSLK), and 279 to 348 (GDVV…LSIK). The segment covering 351-366 (EERPAQEEGQKEEKRA) has biased composition (basic and acidic residues). The segment at 351–400 (EERPAQEEGQKEEKRAARPRRPRRQEKRDFELPETQTGFSMADLFGDIEL) is disordered.

The protein belongs to the bacterial ribosomal protein bS1 family. Post-translationally, phosphorylated.

Binds mRNA; thus facilitating recognition of the initiation point. It is needed to translate mRNA with a short Shine-Dalgarno (SD) purine-rich sequence. This chain is Small ribosomal subunit protein bS1 (rpsA), found in Streptococcus pneumoniae (strain ATCC BAA-255 / R6).